The chain runs to 224 residues: Peptidyl-prolyl cis-trans isomerase CYP21-1 (224 aa).

The signal sequence occupies residues 1 to 27 (MRREISFLLQPRCLLLLVALTIFLVFA). Positions 50-214 (FLDVDIDGQR…KKVVIADSGE (165 aa)) constitute a PPIase cyclophilin-type domain. A glycan (N-linked (GlcNAc...) asparagine) is linked at Asn-158.

It belongs to the cyclophilin-type PPIase family. Ubiquitous.

The protein localises to the endoplasmic reticulum. It catalyses the reaction [protein]-peptidylproline (omega=180) = [protein]-peptidylproline (omega=0). In terms of biological role, PPIases accelerate the folding of proteins. It catalyzes the cis-trans isomerization of proline imidic peptide bonds in oligopeptides. The chain is Peptidyl-prolyl cis-trans isomerase CYP21-1 (CYP21-1) from Arabidopsis thaliana (Mouse-ear cress).